The primary structure comprises 422 residues: Phosphoglycerate kinase (422 aa).

Residues 24 to 26, 64 to 67, R129, and R171 each bind substrate; these read DLN and HLGR. Residues K222, G309, E340, and 370–373 each bind ATP; that span reads DIDT.

It belongs to the phosphoglycerate kinase family. In terms of assembly, monomer.

It localises to the cytoplasm. The catalysed reaction is (2R)-3-phosphoglycerate + ATP = (2R)-3-phospho-glyceroyl phosphate + ADP. It functions in the pathway carbohydrate degradation; glycolysis; pyruvate from D-glyceraldehyde 3-phosphate: step 2/5. In Ureaplasma parvum serovar 3 (strain ATCC 700970), this protein is Phosphoglycerate kinase (pgk).